A 369-amino-acid polypeptide reads, in one-letter code: Glutamate 5-kinase (369 aa).

K10 lines the ATP pocket. S50, D137, and N149 together coordinate substrate. ATP contacts are provided by residues 169 to 170 and 210 to 216; these read TD and TGGMVTK. Positions 276-349 constitute a PUA domain; sequence EGSIFIDEGA…GKHSEEMLAT (74 aa).

The protein belongs to the glutamate 5-kinase family.

It localises to the cytoplasm. It catalyses the reaction L-glutamate + ATP = L-glutamyl 5-phosphate + ADP. Its pathway is amino-acid biosynthesis; L-proline biosynthesis; L-glutamate 5-semialdehyde from L-glutamate: step 1/2. Functionally, catalyzes the transfer of a phosphate group to glutamate to form L-glutamate 5-phosphate. In Desulfitobacterium hafniense (strain Y51), this protein is Glutamate 5-kinase.